We begin with the raw amino-acid sequence, 146 residues long: VQWSESERTIINGIFSHLDYDDLGPKAFSRCLIVYPWTQRYFSSFGNLHNAEAIMGNANVAAHGIKVLHGLDLGLKHMDDIMGAYAELSSLHSEKLHVDPDNFKLLSDCIIIAVAAKLGNAFTPETQAAFHKFLAVVVSALGKQYH.

Residues 2 to 146 (QWSESERTII…VVSALGKQYH (145 aa)) form the Globin domain. The heme b site is built by H63 and H92.

This sequence belongs to the globin family. Heterotetramer of two alpha chains and two beta chains. Red blood cells.

In terms of biological role, involved in oxygen transport from gills to the various peripheral tissues. The protein is Hemoglobin subunit beta (hbb) of Pogonophryne scotti (Saddleback plunderfish).